Reading from the N-terminus, the 384-residue chain is Queuine tRNA-ribosyltransferase (384 aa).

Aspartate 103 serves as the catalytic Proton acceptor. Substrate is bound by residues 103–107, aspartate 157, glutamine 200, and glycine 227; that span reads DSGGF. Residues 258–264 form an RNA binding region; that stretch reads GVGTYRE. Aspartate 277 (nucleophile) is an active-site residue. Positions 282–286 are RNA binding; important for wobble base 34 recognition; sequence TRLAR. 4 residues coordinate Zn(2+): cysteine 315, cysteine 317, cysteine 320, and histidine 346.

It belongs to the queuine tRNA-ribosyltransferase family. As to quaternary structure, homodimer. Within each dimer, one monomer is responsible for RNA recognition and catalysis, while the other monomer binds to the replacement base PreQ1. Requires Zn(2+) as cofactor.

The enzyme catalyses 7-aminomethyl-7-carbaguanine + guanosine(34) in tRNA = 7-aminomethyl-7-carbaguanosine(34) in tRNA + guanine. It participates in tRNA modification; tRNA-queuosine biosynthesis. In terms of biological role, catalyzes the base-exchange of a guanine (G) residue with the queuine precursor 7-aminomethyl-7-deazaguanine (PreQ1) at position 34 (anticodon wobble position) in tRNAs with GU(N) anticodons (tRNA-Asp, -Asn, -His and -Tyr). Catalysis occurs through a double-displacement mechanism. The nucleophile active site attacks the C1' of nucleotide 34 to detach the guanine base from the RNA, forming a covalent enzyme-RNA intermediate. The proton acceptor active site deprotonates the incoming PreQ1, allowing a nucleophilic attack on the C1' of the ribose to form the product. After dissociation, two additional enzymatic reactions on the tRNA convert PreQ1 to queuine (Q), resulting in the hypermodified nucleoside queuosine (7-(((4,5-cis-dihydroxy-2-cyclopenten-1-yl)amino)methyl)-7-deazaguanosine). The protein is Queuine tRNA-ribosyltransferase of Synechococcus elongatus (strain ATCC 33912 / PCC 7942 / FACHB-805) (Anacystis nidulans R2).